A 279-amino-acid polypeptide reads, in one-letter code: uncharacterized protein (279 aa).

One can recognise an HTH rpiR-type domain in the interval 1–77 (MGILEQLENP…VTLAKEISNK (77 aa)). The segment at residues 37-56 (ISIIAKESGVGEATITRFTK) is a DNA-binding region (H-T-H motif). The SIS domain occupies 123-263 (CRDLIMNAKR…YTEVIKEMFS (141 aa)).

This is an uncharacterized protein from Clostridium perfringens (strain 13 / Type A).